The following is a 371-amino-acid chain: Cytochrome b (371 aa).

Transmembrane regions (helical) follow at residues 25 to 45 (FGSM…FLAV), 69 to 90 (WMMQ…YIHI), 105 to 125 (WMSG…GYVL), and 170 to 190 (FFAL…LHII). His75 and His89 together coordinate heme b. Positions 174 and 188 each coordinate heme b. An a ubiquinone-binding site is contributed by His193. 4 helical membrane-spanning segments follow: residues 218–238 (YKDL…VSFF), 280–300 (LGGA…PFMH), 312–332 (LSQL…WAAT), and 339–358 (YIMI…LSIP).

The protein belongs to the cytochrome b family. As to quaternary structure, the cytochrome bc1 complex contains 3 respiratory subunits (MT-CYB, CYC1 and UQCRFS1), 2 core proteins (UQCRC1 and UQCRC2) and probably 6 low-molecular weight proteins. Heme b is required as a cofactor.

It localises to the mitochondrion inner membrane. Functionally, component of the ubiquinol-cytochrome c reductase complex (complex III or cytochrome b-c1 complex) that is part of the mitochondrial respiratory chain. The b-c1 complex mediates electron transfer from ubiquinol to cytochrome c. Contributes to the generation of a proton gradient across the mitochondrial membrane that is then used for ATP synthesis. The protein is Cytochrome b (MT-CYB) of Simalia amethistina (Amethystine python).